A 707-amino-acid chain; its full sequence is Molybdenum cofactor sulfurase (707 aa).

The residue at position 206 (Lys206) is an N6-(pyridoxal phosphate)lysine. The active site involves Cys365. Residues 558 to 705 (QWLENALDMT…VEAGSAVRFF (148 aa)) form the MOSC domain.

It belongs to the class-V pyridoxal-phosphate-dependent aminotransferase family. MOCOS subfamily. Requires pyridoxal 5'-phosphate as cofactor.

The enzyme catalyses Mo-molybdopterin + L-cysteine + AH2 = thio-Mo-molybdopterin + L-alanine + A + H2O. The protein operates within cofactor biosynthesis; molybdopterin biosynthesis. In terms of biological role, sulfurates the molybdenum cofactor. Sulfation of molybdenum is essential for xanthine dehydrogenase (XDH) and aldehyde oxidase (ADO) enzymes in which molybdenum cofactor is liganded by 1 oxygen and 1 sulfur atom in active form. In Caenorhabditis briggsae, this protein is Molybdenum cofactor sulfurase (mocs-1).